The primary structure comprises 128 residues: Glycine cleavage system H protein (128 aa).

In terms of domain architecture, Lipoyl-binding spans 24–106 (LVRIGISEFA…HGEGWLLIIR (83 aa)). Position 65 is an N6-lipoyllysine (K65).

This sequence belongs to the GcvH family. In terms of assembly, the glycine cleavage system is composed of four proteins: P, T, L and H. It depends on (R)-lipoate as a cofactor.

Functionally, the glycine cleavage system catalyzes the degradation of glycine. The H protein shuttles the methylamine group of glycine from the P protein to the T protein. In Prochlorococcus marinus (strain NATL2A), this protein is Glycine cleavage system H protein.